Reading from the N-terminus, the 141-residue chain is Nucleoside diphosphate kinase (141 aa).

6 residues coordinate ATP: K11, F59, R87, T93, R104, and N114. H117 acts as the Pros-phosphohistidine intermediate in catalysis.

It belongs to the NDK family. As to quaternary structure, homotetramer. It depends on Mg(2+) as a cofactor.

The protein localises to the cytoplasm. The catalysed reaction is a 2'-deoxyribonucleoside 5'-diphosphate + ATP = a 2'-deoxyribonucleoside 5'-triphosphate + ADP. It carries out the reaction a ribonucleoside 5'-diphosphate + ATP = a ribonucleoside 5'-triphosphate + ADP. Its function is as follows. Major role in the synthesis of nucleoside triphosphates other than ATP. The ATP gamma phosphate is transferred to the NDP beta phosphate via a ping-pong mechanism, using a phosphorylated active-site intermediate. This is Nucleoside diphosphate kinase from Yersinia enterocolitica serotype O:8 / biotype 1B (strain NCTC 13174 / 8081).